Consider the following 272-residue polypeptide: Type III pantothenate kinase (272 aa).

Residue 6–13 coordinates ATP; the sequence is DVRNTHTV. Position 109 to 112 (109 to 112) interacts with substrate; that stretch reads GADR. Aspartate 111 functions as the Proton acceptor in the catalytic mechanism. Aspartate 131 contributes to the K(+) binding site. Serine 134 is a binding site for ATP. Threonine 186 provides a ligand contact to substrate.

This sequence belongs to the type III pantothenate kinase family. Homodimer. NH4(+) is required as a cofactor. K(+) serves as cofactor.

It localises to the cytoplasm. It catalyses the reaction (R)-pantothenate + ATP = (R)-4'-phosphopantothenate + ADP + H(+). It participates in cofactor biosynthesis; coenzyme A biosynthesis; CoA from (R)-pantothenate: step 1/5. Catalyzes the phosphorylation of pantothenate (Pan), the first step in CoA biosynthesis. The sequence is that of Type III pantothenate kinase from Mycobacterium ulcerans (strain Agy99).